Consider the following 206-residue polypeptide: Isochorismatase family protein 1A (206 aa).

It belongs to the isochorismatase family.

This chain is Isochorismatase family protein 1A, found in Dictyostelium discoideum (Social amoeba).